We begin with the raw amino-acid sequence, 266 residues long: MSDILNKIVAVKREEIAAAQKKIPLAAMRADAESRVLTRDFEGALRAKIAAGQAAVIAEIKKASPSKGVIRENFIPADIAQSYAEGNGKVSAACLSVLTDRQFFQGQPDYLKQARASCALPVLRKDFMVDAYQIYESRAMGADAILLIAACLEDAQMAEFEAIAHSLGMAALVEVHDGAELDRALKLRTPLVGINNRNLRTFEVSLDTTVSLRKAVPSDRLLVAESGILTPQDVKTLRDADVHAFLVGEAFMRAQEPGAALAKLFA.

Belongs to the TrpC family.

The enzyme catalyses 1-(2-carboxyphenylamino)-1-deoxy-D-ribulose 5-phosphate + H(+) = (1S,2R)-1-C-(indol-3-yl)glycerol 3-phosphate + CO2 + H2O. It functions in the pathway amino-acid biosynthesis; L-tryptophan biosynthesis; L-tryptophan from chorismate: step 4/5. The protein is Indole-3-glycerol phosphate synthase of Paracidovorax citrulli (strain AAC00-1) (Acidovorax citrulli).